We begin with the raw amino-acid sequence, 317 residues long: Tenomodulin (317 aa).

Residues 1–30 (MAKNPPENCEGCHILNAEALKSKKICKSLK) are Cytoplasmic-facing. Residues 31–50 (ICGLVFGILALTLIVLFWGS) form a helical; Signal-anchor for type II membrane protein membrane-spanning segment. Over 51 to 317 (KHFWPEVSKK…WWVARMLGRV (267 aa)) the chain is Extracellular. The BRICHOS domain maps to 93 to 186 (GNGTDETLEV…ICDNVTMYWI (94 aa)). N-linked (GlcNAc...) asparagine glycosylation occurs at Asn94. Cys120 and Cys178 are disulfide-bonded. Asn180 carries N-linked (GlcNAc...) asparagine glycosylation. Ser239 carries the phosphoserine modification.

Belongs to the chondromodulin-1 family. In terms of tissue distribution, widely expressed with highest expression in tendons and ligaments, in the diaphragm, eye and skeletal muscle. Expressed in neuronal cells of all brain regions. Very low expression, if any, in glial cells.

It localises to the membrane. The protein resides in the nucleus envelope. May be an angiogenesis inhibitor. The polypeptide is Tenomodulin (Tnmd) (Mus musculus (Mouse)).